Reading from the N-terminus, the 123-residue chain is MTTLDPAIAGRLKRNPDGLVPAVVQQHDTGEVLMLGWMDDEALARTLTTGRATYWSRSRQEYWLKGETSGHVQWVKEVRLDCDGDTILVKVDQVGAACHTGDRTCFDADLLSGADRPGPDARG.

Mg(2+) is bound at residue Asp81. Cys82 lines the Zn(2+) pocket. Asp83 and Asp85 together coordinate Mg(2+). 2 residues coordinate Zn(2+): Cys98 and Cys105.

This sequence belongs to the PRA-CH family. In terms of assembly, homodimer. Mg(2+) serves as cofactor. Zn(2+) is required as a cofactor.

Its subcellular location is the cytoplasm. The catalysed reaction is 1-(5-phospho-beta-D-ribosyl)-5'-AMP + H2O = 1-(5-phospho-beta-D-ribosyl)-5-[(5-phospho-beta-D-ribosylamino)methylideneamino]imidazole-4-carboxamide. Its pathway is amino-acid biosynthesis; L-histidine biosynthesis; L-histidine from 5-phospho-alpha-D-ribose 1-diphosphate: step 3/9. In terms of biological role, catalyzes the hydrolysis of the adenine ring of phosphoribosyl-AMP. This chain is Phosphoribosyl-AMP cyclohydrolase, found in Nocardioides sp. (strain ATCC BAA-499 / JS614).